Here is a 332-residue protein sequence, read N- to C-terminus: Ketol-acid reductoisomerase (NADP(+)) (332 aa).

The 181-residue stretch at 5-185 (VKVYYDDEVS…GCTRAGVIET (181 aa)) folds into the KARI N-terminal Rossmann domain. Residues 28–31 (YGNQ), Arg51, Ser56, and 86–89 (DLVQ) contribute to the NADP(+) site. Residue His111 is part of the active site. An NADP(+)-binding site is contributed by Gly137. One can recognise a KARI C-terminal knotted domain in the interval 186–331 (TFKDETESDL…RFIRKMSGLE (146 aa)). Asp194, Glu198, Glu230, and Glu234 together coordinate Mg(2+). Ser255 contributes to the substrate binding site.

The protein belongs to the ketol-acid reductoisomerase family. The cofactor is Mg(2+).

It carries out the reaction (2R)-2,3-dihydroxy-3-methylbutanoate + NADP(+) = (2S)-2-acetolactate + NADPH + H(+). The catalysed reaction is (2R,3R)-2,3-dihydroxy-3-methylpentanoate + NADP(+) = (S)-2-ethyl-2-hydroxy-3-oxobutanoate + NADPH + H(+). Its pathway is amino-acid biosynthesis; L-isoleucine biosynthesis; L-isoleucine from 2-oxobutanoate: step 2/4. It functions in the pathway amino-acid biosynthesis; L-valine biosynthesis; L-valine from pyruvate: step 2/4. Its function is as follows. Involved in the biosynthesis of branched-chain amino acids (BCAA). Catalyzes an alkyl-migration followed by a ketol-acid reduction of (S)-2-acetolactate (S2AL) to yield (R)-2,3-dihydroxy-isovalerate. In the isomerase reaction, S2AL is rearranged via a Mg-dependent methyl migration to produce 3-hydroxy-3-methyl-2-ketobutyrate (HMKB). In the reductase reaction, this 2-ketoacid undergoes a metal-dependent reduction by NADPH to yield (R)-2,3-dihydroxy-isovalerate. The polypeptide is Ketol-acid reductoisomerase (NADP(+)) (Pyrococcus abyssi (strain GE5 / Orsay)).